A 113-amino-acid chain; its full sequence is Large ribosomal subunit protein bL19 (113 aa).

This sequence belongs to the bacterial ribosomal protein bL19 family.

Its function is as follows. This protein is located at the 30S-50S ribosomal subunit interface and may play a role in the structure and function of the aminoacyl-tRNA binding site. This chain is Large ribosomal subunit protein bL19, found in Mycobacterium avium (strain 104).